The chain runs to 440 residues: Transposon Ty1-NL2 Gag polyprotein (440 aa).

Polar residues-rich tracts occupy residues 1–23, 48–60, 71–97, and 129–152; these read MESQ…SVTS, TKAN…TPAS, SPQT…NQAN, and QFPQ…GNTF. 3 disordered regions span residues 1-97, 129-171, and 352-440; these read MESQ…NQAN, QFPQ…YVRP, and GSRN…PETY. Over residues 153–165 the composition is skewed to low complexity; the sequence is TDSSSADSDMTST. Residues 299–401 are RNA-binding; it reads NNGIHINNKV…NSKSKTARAH (103 aa). Residues 402–418 show a composition bias toward low complexity; it reads NVSTSNNSPSTDNDSIS. The residue at position 416 (Ser416) is a Phosphoserine. The segment covering 419–428 has biased composition (polar residues); sequence KSTTEPIQLN. The span at 429–440 shows a compositional bias: basic and acidic residues; it reads NKHDLHLRPETY.

As to quaternary structure, homotrimer.

It localises to the cytoplasm. Capsid protein (CA) is the structural component of the virus-like particle (VLP), forming the shell that encapsulates the retrotransposons dimeric RNA genome. The particles are assembled from trimer-clustered units and there are holes in the capsid shells that allow for the diffusion of macromolecules. CA also has nucleocapsid-like chaperone activity, promoting primer tRNA(i)-Met annealing to the multipartite primer-binding site (PBS), dimerization of Ty1 RNA and initiation of reverse transcription. The sequence is that of Transposon Ty1-NL2 Gag polyprotein (TY1A-NL2) from Saccharomyces cerevisiae (strain ATCC 204508 / S288c) (Baker's yeast).